The sequence spans 106 residues: Large ribosomal subunit protein bL21 (106 aa).

Belongs to the bacterial ribosomal protein bL21 family. In terms of assembly, part of the 50S ribosomal subunit. Contacts protein L20.

Functionally, this protein binds to 23S rRNA in the presence of protein L20. The protein is Large ribosomal subunit protein bL21 of Fervidobacterium nodosum (strain ATCC 35602 / DSM 5306 / Rt17-B1).